The primary structure comprises 338 residues: 1-aminocyclopropane-1-carboxylate deaminase (338 aa).

Lys51 is modified (N6-(pyridoxal phosphate)lysine). The active-site Nucleophile is Ser78.

This sequence belongs to the ACC deaminase/D-cysteine desulfhydrase family. Homotrimer. Pyridoxal 5'-phosphate is required as a cofactor.

The catalysed reaction is 1-aminocyclopropane-1-carboxylate + H2O = 2-oxobutanoate + NH4(+). Its function is as follows. Catalyzes a cyclopropane ring-opening reaction, the irreversible conversion of 1-aminocyclopropane-1-carboxylate (ACC) to ammonia and alpha-ketobutyrate. Allows growth on ACC as a nitrogen source. This chain is 1-aminocyclopropane-1-carboxylate deaminase, found in Pseudomonas putida (Arthrobacter siderocapsulatus).